Here is a 116-residue protein sequence, read N- to C-terminus: MNLILAGLLIMSILSMILAMIAFWLPNMTPDTEKLSPYECGFDPLGSARLPFSLRFFLVAILFLLFDLEIALLLPLPWADQLTNPTLALTWTTSIIALLTLGLIHEWTQGGLEWAE.

3 helical membrane passes run 3-23 (LILA…MIAF), 56-76 (FFLV…LLPL), and 85-105 (PTLA…GLIH).

It belongs to the complex I subunit 3 family.

It is found in the mitochondrion membrane. It carries out the reaction a ubiquinone + NADH + 5 H(+)(in) = a ubiquinol + NAD(+) + 4 H(+)(out). Core subunit of the mitochondrial membrane respiratory chain NADH dehydrogenase (Complex I) that is believed to belong to the minimal assembly required for catalysis. Complex I functions in the transfer of electrons from NADH to the respiratory chain. The immediate electron acceptor for the enzyme is believed to be ubiquinone. In Latimeria chalumnae (Coelacanth), this protein is NADH-ubiquinone oxidoreductase chain 3 (MT-ND3).